A 442-amino-acid chain; its full sequence is uncharacterized protein (442 aa).

This is an uncharacterized protein from Sputnik virophage.